The chain runs to 583 residues: MDLLWMPLLLVAARISAVHSSPEVNAGVSSIHITKPVHILEERNLLVLTPAGLTQMLNQTRFLMVLFHNPSSKQSRNLAEELGKAVEIMGKGKNGIGFGKVDITVEKELQQEFGITKAPQLKLFFEGNRSEPISCKGVVESTALVVWLRRQISQKAFLFNSSLQVAEFVTSRPLVIVGFFQDLEEEVAELFYDVIKDFPELTFGVITIGNAIGRFHVTLDSILVFKKGKIVNRQELINDSTNKQELNRVIKQHLTDFVIEYNAENKDLIYELYIMSHMLLFVSKSSESFGIIIQHYKLASKEFQNKILFILVNADEPRNRRVIEYFRVTEVDIPSVQILNLSSDARYKMPSDDITYENLKKFGRSFLSKNAKKHQSSEEIPKHWDQGLVKQLVGKNFNIVVFDKEKDVFVMFYAPWSKKCKMLFPLLEELGRKYQNHSTIIIAKIDITANDIQLVYLDRYPFFRLFPTDSQQAVLYKGEHTLKGFSDFLESYIKTSIEDEDELLSVEQNEVIEEEVRAKEKEVPMMKKELPEQQSPELENVTKHVSKLEESAGKKKTSEEVVVVAKPKGPPTQKKKPKVKEEL.

An N-terminal signal peptide occupies residues 1–17 (MDLLWMPLLLVAARISA). Asn58, Asn128, Asn160, and Asn340 each carry an N-linked (GlcNAc...) asparagine glycan. Residues 388–451 (LVKQLVGKNF…IAKIDITAND (64 aa)) enclose the Thioredoxin domain. Basic and acidic residues-rich tracts occupy residues 522 to 531 (EVPMMKKELP) and 540 to 559 (NVTKHVSKLEESAGKKKTSE). The disordered stretch occupies residues 522-583 (EVPMMKKELP…KKKPKVKEEL (62 aa)). Asn540 carries N-linked (GlcNAc...) asparagine glycosylation. Residues 573 to 583 (QKKKPKVKEEL) show a composition bias toward basic residues. The short motif at 580-583 (KEEL) is the Prevents secretion from ER element.

This sequence belongs to the protein disulfide isomerase family. In terms of assembly, homodimer. The homodimer is not disulfide-linked. Interacts with ERO1A and CLGN. N-glycosylated.

It is found in the endoplasmic reticulum. In terms of biological role, probable redox-inactive chaperone involved in spermatogenesis. The sequence is that of Protein disulfide-isomerase-like protein of the testis (PDILT) from Macaca fascicularis (Crab-eating macaque).